The chain runs to 251 residues: Methionine aminopeptidase (251 aa).

H76 serves as a coordination point for substrate. The a divalent metal cation site is built by D93, D104, and H168. H175 serves as a coordination point for substrate. E202 and E233 together coordinate a divalent metal cation.

This sequence belongs to the peptidase M24A family. Methionine aminopeptidase type 1 subfamily. Monomer. Requires Co(2+) as cofactor. Zn(2+) is required as a cofactor. The cofactor is Mn(2+). Fe(2+) serves as cofactor.

It catalyses the reaction Release of N-terminal amino acids, preferentially methionine, from peptides and arylamides.. Its function is as follows. Removes the N-terminal methionine from nascent proteins. The N-terminal methionine is often cleaved when the second residue in the primary sequence is small and uncharged (Met-Ala-, Cys, Gly, Pro, Ser, Thr, or Val). Requires deformylation of the N(alpha)-formylated initiator methionine before it can be hydrolyzed. The protein is Methionine aminopeptidase of Staphylococcus epidermidis (strain ATCC 12228 / FDA PCI 1200).